The following is a 148-amino-acid chain: Glutamyl-tRNA(Gln) amidotransferase subunit C, mitochondrial (148 aa).

This sequence belongs to the GatC family. In terms of assembly, subunit of the heterotrimeric GatCAB amidotransferase (AdT) complex, composed of A, B and C subunits.

The protein resides in the mitochondrion. The enzyme catalyses L-glutamyl-tRNA(Gln) + L-glutamine + ATP + H2O = L-glutaminyl-tRNA(Gln) + L-glutamate + ADP + phosphate + H(+). Its function is as follows. Allows the formation of correctly charged Gln-tRNA(Gln) through the transamidation of misacylated Glu-tRNA(Gln) in the mitochondria. The reaction takes place in the presence of glutamine and ATP through an activated gamma-phospho-Glu-tRNA(Gln). The polypeptide is Glutamyl-tRNA(Gln) amidotransferase subunit C, mitochondrial (Drosophila pseudoobscura pseudoobscura (Fruit fly)).